The following is a 398-amino-acid chain: Arylacetamide deacetylase (398 aa).

Residues 1–4 (GVKT) lie on the Cytoplasmic side of the membrane. The helical; Signal-anchor for type II membrane protein transmembrane segment at 5-22 (VLLLIVGVLGAYYVYTPL) threads the bilayer. Residues 23-398 (PDNIEEPWRL…QYFEWLRENV (376 aa)) are Lumenal-facing. N77 is a glycosylation site (N-linked (GlcNAc...) asparagine). Positions 110–112 (HGG) match the Involved in the stabilization of the negatively charged intermediate by the formation of the oxyanion hole motif. A disulfide bond links C115 and C339. The active site involves S188. Residue N281 is glycosylated (N-linked (GlcNAc...) asparagine). Active-site residues include D342 and H372.

It belongs to the 'GDXG' lipolytic enzyme family. Post-translationally, glycosylated.

Its subcellular location is the endoplasmic reticulum membrane. It is found in the microsome membrane. It carries out the reaction a triacylglycerol + H2O = a diacylglycerol + a fatty acid + H(+). With respect to regulation, inhibited by diisopropylphosphofluoridate (DFP). Functionally, displays cellular triglyceride lipase activity in liver, increases the levels of intracellular fatty acids derived from the hydrolysis of newly formed triglyceride stores and plays a role in very low-density lipoprotein assembly. Displays serine esterase activity in liver. Deacetylates a variety of arylacetamide substrates, including xenobiotic compounds and procarcinogens, converting them to the primary arylamide compounds and increasing their toxicity. This is Arylacetamide deacetylase from Oryctolagus cuniculus (Rabbit).